A 382-amino-acid polypeptide reads, in one-letter code: S-adenosylmethionine synthase (382 aa).

His15 serves as a coordination point for ATP. A Mg(2+)-binding site is contributed by Asp17. Glu43 is a binding site for K(+). 2 residues coordinate L-methionine: Glu56 and Gln99. The tract at residues 99–109 (QSGDIAQGVDR) is flexible loop. ATP-binding positions include 164–166 (DAK), 230–231 (KF), Asp239, 245–246 (RK), Ala262, and Lys266. Position 239 (Asp239) interacts with L-methionine. Lys270 contributes to the L-methionine binding site.

The protein belongs to the AdoMet synthase family. In terms of assembly, homotetramer; dimer of dimers. Mg(2+) serves as cofactor. The cofactor is K(+).

It localises to the cytoplasm. The catalysed reaction is L-methionine + ATP + H2O = S-adenosyl-L-methionine + phosphate + diphosphate. The protein operates within amino-acid biosynthesis; S-adenosyl-L-methionine biosynthesis; S-adenosyl-L-methionine from L-methionine: step 1/1. Its function is as follows. Catalyzes the formation of S-adenosylmethionine (AdoMet) from methionine and ATP. The overall synthetic reaction is composed of two sequential steps, AdoMet formation and the subsequent tripolyphosphate hydrolysis which occurs prior to release of AdoMet from the enzyme. In Dichelobacter nodosus (strain VCS1703A), this protein is S-adenosylmethionine synthase.